The chain runs to 485 residues: Aspartyl/glutamyl-tRNA(Asn/Gln) amidotransferase subunit B (485 aa).

This sequence belongs to the GatB/GatE family. GatB subfamily. In terms of assembly, heterotrimer of A, B and C subunits.

The catalysed reaction is L-glutamyl-tRNA(Gln) + L-glutamine + ATP + H2O = L-glutaminyl-tRNA(Gln) + L-glutamate + ADP + phosphate + H(+). It catalyses the reaction L-aspartyl-tRNA(Asn) + L-glutamine + ATP + H2O = L-asparaginyl-tRNA(Asn) + L-glutamate + ADP + phosphate + 2 H(+). Functionally, allows the formation of correctly charged Asn-tRNA(Asn) or Gln-tRNA(Gln) through the transamidation of misacylated Asp-tRNA(Asn) or Glu-tRNA(Gln) in organisms which lack either or both of asparaginyl-tRNA or glutaminyl-tRNA synthetases. The reaction takes place in the presence of glutamine and ATP through an activated phospho-Asp-tRNA(Asn) or phospho-Glu-tRNA(Gln). This Methylacidiphilum infernorum (isolate V4) (Methylokorus infernorum (strain V4)) protein is Aspartyl/glutamyl-tRNA(Asn/Gln) amidotransferase subunit B.